A 1077-amino-acid polypeptide reads, in one-letter code: Adenylate cyclase type 4 (1077 aa).

The Cytoplasmic portion of the chain corresponds to 1 to 28 (MARLFSPRPPPSEDLFYETYYSLSQQYP). Transmembrane regions (helical) follow at residues 29-50 (LLIL…VAWA), 61-80 (FLTT…GLAS), 94-117 (GLIW…VSAW), 120-138 (VSFF…PLGM), 141-162 (AAAA…YLGW), and 170-190 (LLPQ…VGAY). The Cytoplasmic portion of the chain corresponds to 191–582 (HKALMERALR…YRLSALPAFK (392 aa)). D278, I279, and D322 together coordinate Mg(2+). ATP contacts are provided by residues 278-283 (DIVGFT), 320-322 (LGD), and R366. Residues 503-524 (TSTPLPEKAFSPQWSLDRSRTP) form a disordered region. S517 carries the post-translational modification Phosphoserine. T533 carries the phosphothreonine modification. The next 3 helical transmembrane spans lie at 583–604 (YYAA…LVTT), 608–630 (ALII…CFSE), and 661–684 (VALG…FLPV). Residues 685-717 (SSDCLFLASNVSSVTFNASWEMPGSLPLISIPL) lie on the Extracellular side of the membrane. N-linked (GlcNAc...) asparagine glycans are attached at residues N694 and N701. A run of 3 helical transmembrane segments spans residues 718–738 (ISIP…SLFL), 746–766 (LLLL…SHAW), and 793–809 (MGAI…LVLA). Over 810–1077 (RQNEYYCRLD…LTRTGSPSAS (268 aa)) the chain is Cytoplasmic. ATP contacts are provided by residues K927, 1007–1009 (DIW), 1014–1018 (NVASR), and K1054.

Belongs to the adenylyl cyclase class-4/guanylyl cyclase family. The cofactor is Mg(2+). Mn(2+) serves as cofactor.

The protein localises to the cell membrane. It localises to the cytoplasm. The enzyme catalyses ATP = 3',5'-cyclic AMP + diphosphate. Activated by forskolin. Insensitive to calcium/calmodulin. Stimulated by GNAS and by the G-protein beta and gamma subunit complex. Its function is as follows. Catalyzes the formation of the signaling molecule cAMP in response to G-protein signaling. This chain is Adenylate cyclase type 4 (Adcy4), found in Mus musculus (Mouse).